We begin with the raw amino-acid sequence, 262 residues long: Acyl-[acyl-carrier-protein]--UDP-N-acetylglucosamine O-acyltransferase (262 aa).

Belongs to the transferase hexapeptide repeat family. LpxA subfamily. In terms of assembly, homotrimer.

It localises to the cytoplasm. The enzyme catalyses a (3R)-hydroxyacyl-[ACP] + UDP-N-acetyl-alpha-D-glucosamine = a UDP-3-O-[(3R)-3-hydroxyacyl]-N-acetyl-alpha-D-glucosamine + holo-[ACP]. It participates in glycolipid biosynthesis; lipid IV(A) biosynthesis; lipid IV(A) from (3R)-3-hydroxytetradecanoyl-[acyl-carrier-protein] and UDP-N-acetyl-alpha-D-glucosamine: step 1/6. In terms of biological role, involved in the biosynthesis of lipid A, a phosphorylated glycolipid that anchors the lipopolysaccharide to the outer membrane of the cell. This is Acyl-[acyl-carrier-protein]--UDP-N-acetylglucosamine O-acyltransferase from Campylobacter curvus (strain 525.92).